The sequence spans 274 residues: Large ribosomal subunit protein uL2 (274 aa).

Disordered regions lie at residues 28-53 and 223-274; these read KPYA…TVRH and VAMN…RRTK. Positions 39–48 are enriched in low complexity; sequence KSGGRNNNGR. Positions 254–274 are enriched in basic residues; it reads KGAKTRKNKRTDKFIVRRRTK.

This sequence belongs to the universal ribosomal protein uL2 family. In terms of assembly, part of the 50S ribosomal subunit. Forms a bridge to the 30S subunit in the 70S ribosome.

In terms of biological role, one of the primary rRNA binding proteins. Required for association of the 30S and 50S subunits to form the 70S ribosome, for tRNA binding and peptide bond formation. It has been suggested to have peptidyltransferase activity; this is somewhat controversial. Makes several contacts with the 16S rRNA in the 70S ribosome. The sequence is that of Large ribosomal subunit protein uL2 from Pseudoalteromonas translucida (strain TAC 125).